The chain runs to 176 residues: MNSDIVEVATIGRCVGLKGYLKLHNKSDFPEQFKKGATFFDKNDDQLIIKDYNRQKELVLFEKFDDLDLAKTLVNKTIYTTKELTRKNCKLKKDEFFQFDIIGLKVVENGEILGIVEDIQDNFANSLLYIKTDEVLIAAGKPKNFYIPYLERFIESVNLDSGEILVKGARDILENS.

One can recognise a PRC barrel domain in the interval 93–172 (KDEFFQFDII…EILVKGARDI (80 aa)).

Belongs to the RimM family. As to quaternary structure, binds ribosomal protein uS19.

It is found in the cytoplasm. An accessory protein needed during the final step in the assembly of 30S ribosomal subunit, possibly for assembly of the head region. Essential for efficient processing of 16S rRNA. May be needed both before and after RbfA during the maturation of 16S rRNA. It has affinity for free ribosomal 30S subunits but not for 70S ribosomes. This chain is Ribosome maturation factor RimM, found in Campylobacter concisus (strain 13826).